The following is a 134-amino-acid chain: Translation initiation factor 2 subunit beta (134 aa).

Belongs to the eIF-2-beta/eIF-5 family. In terms of assembly, heterotrimer composed of an alpha, a beta and a gamma chain.

Its function is as follows. eIF-2 functions in the early steps of protein synthesis by forming a ternary complex with GTP and initiator tRNA. The polypeptide is Translation initiation factor 2 subunit beta (Pyrobaculum neutrophilum (strain DSM 2338 / JCM 9278 / NBRC 100436 / V24Sta) (Thermoproteus neutrophilus)).